The primary structure comprises 125 residues: Holo-[acyl-carrier-protein] synthase (125 aa).

2 residues coordinate Mg(2+): aspartate 8 and glutamate 57.

The protein belongs to the P-Pant transferase superfamily. AcpS family. The cofactor is Mg(2+).

The protein localises to the cytoplasm. The catalysed reaction is apo-[ACP] + CoA = holo-[ACP] + adenosine 3',5'-bisphosphate + H(+). Transfers the 4'-phosphopantetheine moiety from coenzyme A to a Ser of acyl-carrier-protein. In Nitrosospira multiformis (strain ATCC 25196 / NCIMB 11849 / C 71), this protein is Holo-[acyl-carrier-protein] synthase.